Here is a 145-residue protein sequence, read N- to C-terminus: D-aminoacyl-tRNA deacylase (145 aa).

Positions 137 to 138 (GP) match the Gly-cisPro motif, important for rejection of L-amino acids motif.

It belongs to the DTD family. As to quaternary structure, homodimer.

It is found in the cytoplasm. The enzyme catalyses glycyl-tRNA(Ala) + H2O = tRNA(Ala) + glycine + H(+). It carries out the reaction a D-aminoacyl-tRNA + H2O = a tRNA + a D-alpha-amino acid + H(+). In terms of biological role, an aminoacyl-tRNA editing enzyme that deacylates mischarged D-aminoacyl-tRNAs. Also deacylates mischarged glycyl-tRNA(Ala), protecting cells against glycine mischarging by AlaRS. Acts via tRNA-based rather than protein-based catalysis; rejects L-amino acids rather than detecting D-amino acids in the active site. By recycling D-aminoacyl-tRNA to D-amino acids and free tRNA molecules, this enzyme counteracts the toxicity associated with the formation of D-aminoacyl-tRNA entities in vivo and helps enforce protein L-homochirality. The chain is D-aminoacyl-tRNA deacylase from Saccharophagus degradans (strain 2-40 / ATCC 43961 / DSM 17024).